Consider the following 123-residue polypeptide: UPF0738 protein BCG9842_B4089 (123 aa).

It belongs to the UPF0738 family.

This Bacillus cereus (strain G9842) protein is UPF0738 protein BCG9842_B4089.